Consider the following 200-residue polypeptide: Large ribosomal subunit protein uL4 (200 aa).

Residues 43-65 are disordered; sequence RAQKTRSEVSGGGAKPWRQKGTG.

This sequence belongs to the universal ribosomal protein uL4 family. Part of the 50S ribosomal subunit.

In terms of biological role, one of the primary rRNA binding proteins, this protein initially binds near the 5'-end of the 23S rRNA. It is important during the early stages of 50S assembly. It makes multiple contacts with different domains of the 23S rRNA in the assembled 50S subunit and ribosome. Forms part of the polypeptide exit tunnel. In Aliivibrio salmonicida (strain LFI1238) (Vibrio salmonicida (strain LFI1238)), this protein is Large ribosomal subunit protein uL4.